We begin with the raw amino-acid sequence, 213 residues long: Small ribosomal subunit protein uS4 (213 aa).

A disordered region spans residues Gly16 to Ser53. Over residues Val44–Ser53 the composition is skewed to polar residues. Residues Ser97–Lys163 enclose the S4 RNA-binding domain.

It belongs to the universal ribosomal protein uS4 family. Part of the 30S ribosomal subunit. Contacts protein S5. The interaction surface between S4 and S5 is involved in control of translational fidelity.

One of the primary rRNA binding proteins, it binds directly to 16S rRNA where it nucleates assembly of the body of the 30S subunit. In terms of biological role, with S5 and S12 plays an important role in translational accuracy. This chain is Small ribosomal subunit protein uS4, found in Psychrobacter cryohalolentis (strain ATCC BAA-1226 / DSM 17306 / VKM B-2378 / K5).